Consider the following 63-residue polypeptide: Glutamine synthetase translation inhibitor (63 aa).

Inhibits the synthesis of glutamine synthetase II. The sequence is that of Glutamine synthetase translation inhibitor (gstI) from Rhizobium leguminosarum.